A 258-amino-acid polypeptide reads, in one-letter code: Acyl-[acyl-carrier-protein]--UDP-N-acetylglucosamine O-acyltransferase (258 aa).

Belongs to the transferase hexapeptide repeat family. LpxA subfamily. In terms of assembly, homotrimer.

Its subcellular location is the cytoplasm. It catalyses the reaction a (3R)-hydroxyacyl-[ACP] + UDP-N-acetyl-alpha-D-glucosamine = a UDP-3-O-[(3R)-3-hydroxyacyl]-N-acetyl-alpha-D-glucosamine + holo-[ACP]. It functions in the pathway glycolipid biosynthesis; lipid IV(A) biosynthesis; lipid IV(A) from (3R)-3-hydroxytetradecanoyl-[acyl-carrier-protein] and UDP-N-acetyl-alpha-D-glucosamine: step 1/6. Involved in the biosynthesis of lipid A, a phosphorylated glycolipid that anchors the lipopolysaccharide to the outer membrane of the cell. The chain is Acyl-[acyl-carrier-protein]--UDP-N-acetylglucosamine O-acyltransferase from Neisseria meningitidis serogroup B (strain ATCC BAA-335 / MC58).